The primary structure comprises 486 residues: Phosphomethylpyrimidine synthase (486 aa).

Residues Asn-80, Met-109, Tyr-139, His-175, 195 to 197, 236 to 239, and Glu-275 contribute to the substrate site; these read SRG and DSLR. His-279 lines the Zn(2+) pocket. Substrate is bound at residue Tyr-329. His-370 provides a ligand contact to Zn(2+). The [4Fe-4S] cluster site is built by Cys-450, Cys-453, and Cys-458.

Belongs to the ThiC family. [4Fe-4S] cluster serves as cofactor.

It catalyses the reaction 5-amino-1-(5-phospho-beta-D-ribosyl)imidazole + S-adenosyl-L-methionine = 4-amino-2-methyl-5-(phosphooxymethyl)pyrimidine + CO + 5'-deoxyadenosine + formate + L-methionine + 3 H(+). Its pathway is cofactor biosynthesis; thiamine diphosphate biosynthesis. Functionally, catalyzes the synthesis of the hydroxymethylpyrimidine phosphate (HMP-P) moiety of thiamine from aminoimidazole ribotide (AIR) in a radical S-adenosyl-L-methionine (SAM)-dependent reaction. The protein is Phosphomethylpyrimidine synthase of Trichodesmium erythraeum (strain IMS101).